A 434-amino-acid polypeptide reads, in one-letter code: Glutamate-1-semialdehyde 2,1-aminomutase 1 (434 aa).

Position 268 is an N6-(pyridoxal phosphate)lysine (Lys-268).

This sequence belongs to the class-III pyridoxal-phosphate-dependent aminotransferase family. HemL subfamily. As to quaternary structure, homodimer. Pyridoxal 5'-phosphate is required as a cofactor.

Its subcellular location is the cytoplasm. It catalyses the reaction (S)-4-amino-5-oxopentanoate = 5-aminolevulinate. Its pathway is porphyrin-containing compound metabolism; protoporphyrin-IX biosynthesis; 5-aminolevulinate from L-glutamyl-tRNA(Glu): step 2/2. This is Glutamate-1-semialdehyde 2,1-aminomutase 1 from Shouchella clausii (strain KSM-K16) (Alkalihalobacillus clausii).